A 591-amino-acid polypeptide reads, in one-letter code: Aspartate--tRNA(Asp/Asn) ligase (591 aa).

Glu-175 is an L-aspartate binding site. An aspartate region spans residues 199 to 202 (QQFK). Residues Arg-221 and His-453 each contribute to the L-aspartate site. Residue 221–223 (RDE) coordinates ATP. An ATP-binding site is contributed by Glu-486. Arg-493 provides a ligand contact to L-aspartate. 538-541 (GIDR) is an ATP binding site.

The protein belongs to the class-II aminoacyl-tRNA synthetase family. Type 1 subfamily. In terms of assembly, homodimer.

The protein resides in the cytoplasm. It carries out the reaction tRNA(Asx) + L-aspartate + ATP = L-aspartyl-tRNA(Asx) + AMP + diphosphate. Aspartyl-tRNA synthetase with relaxed tRNA specificity since it is able to aspartylate not only its cognate tRNA(Asp) but also tRNA(Asn). Reaction proceeds in two steps: L-aspartate is first activated by ATP to form Asp-AMP and then transferred to the acceptor end of tRNA(Asp/Asn). The sequence is that of Aspartate--tRNA(Asp/Asn) ligase from Paracoccus denitrificans (strain Pd 1222).